Here is a 374-residue protein sequence, read N- to C-terminus: Ribonuclease D (374 aa).

In terms of domain architecture, 3'-5' exonuclease spans 6-171 (IISTTEDLKK…RATRVILLSK (166 aa)). Residues 213–292 (DRKSIGVAQE…ARALNKKEVD (80 aa)) enclose the HRDC domain.

This sequence belongs to the RNase D family. It depends on a divalent metal cation as a cofactor.

It localises to the cytoplasm. The enzyme catalyses Exonucleolytic cleavage that removes extra residues from the 3'-terminus of tRNA to produce 5'-mononucleotides.. In terms of biological role, exonuclease involved in the 3' processing of various precursor tRNAs. Initiates hydrolysis at the 3'-terminus of an RNA molecule and releases 5'-mononucleotides. The sequence is that of Ribonuclease D from Desulfotalea psychrophila (strain LSv54 / DSM 12343).